The sequence spans 54 residues: Ribulose bisphosphate carboxylase large chain (54 aa).

Residues 1–2 constitute a propeptide that is removed on maturation; it reads MS. Position 3 is an N-acetylproline (proline 3). Lysine 14 carries the N6,N6,N6-trimethyllysine modification.

This sequence belongs to the RuBisCO large chain family. Type I subfamily. As to quaternary structure, heterohexadecamer of 8 large chains and 8 small chains.

The protein resides in the plastid. It is found in the chloroplast. The catalysed reaction is 2 (2R)-3-phosphoglycerate + 2 H(+) = D-ribulose 1,5-bisphosphate + CO2 + H2O. It catalyses the reaction D-ribulose 1,5-bisphosphate + O2 = 2-phosphoglycolate + (2R)-3-phosphoglycerate + 2 H(+). Its function is as follows. RuBisCO catalyzes two reactions: the carboxylation of D-ribulose 1,5-bisphosphate, the primary event in carbon dioxide fixation, as well as the oxidative fragmentation of the pentose substrate in the photorespiration process. Both reactions occur simultaneously and in competition at the same active site. This is Ribulose bisphosphate carboxylase large chain (rbcL) from Rhamnus cathartica (Common buckthorn).